The chain runs to 157 residues: ATP synthase subunit b' (157 aa).

The chain crosses the membrane as a helical span at residues 22–42 (ATLPIIAVQFLLLVAVLNSLF).

It belongs to the ATPase B chain family. In terms of assembly, F-type ATPases have 2 components, F(1) - the catalytic core - and F(0) - the membrane proton channel. F(1) has five subunits: alpha(3), beta(3), gamma(1), delta(1), epsilon(1). F(0) has four main subunits: a(1), b(1), b'(1) and c(10-14). The alpha and beta chains form an alternating ring which encloses part of the gamma chain. F(1) is attached to F(0) by a central stalk formed by the gamma and epsilon chains, while a peripheral stalk is formed by the delta, b and b' chains.

Its subcellular location is the cellular thylakoid membrane. In terms of biological role, f(1)F(0) ATP synthase produces ATP from ADP in the presence of a proton or sodium gradient. F-type ATPases consist of two structural domains, F(1) containing the extramembraneous catalytic core and F(0) containing the membrane proton channel, linked together by a central stalk and a peripheral stalk. During catalysis, ATP synthesis in the catalytic domain of F(1) is coupled via a rotary mechanism of the central stalk subunits to proton translocation. Its function is as follows. Component of the F(0) channel, it forms part of the peripheral stalk, linking F(1) to F(0). The b'-subunit is a diverged and duplicated form of b found in plants and photosynthetic bacteria. The sequence is that of ATP synthase subunit b' from Synechococcus sp. (strain JA-3-3Ab) (Cyanobacteria bacterium Yellowstone A-Prime).